A 363-amino-acid polypeptide reads, in one-letter code: Flagellar P-ring protein 2 (363 aa).

Positions M1–A20 are cleaved as a signal peptide.

Belongs to the FlgI family. In terms of assembly, the basal body constitutes a major portion of the flagellar organelle and consists of four rings (L,P,S, and M) mounted on a central rod.

It localises to the periplasm. The protein resides in the bacterial flagellum basal body. Assembles around the rod to form the L-ring and probably protects the motor/basal body from shearing forces during rotation. In Vibrio parahaemolyticus serotype O3:K6 (strain RIMD 2210633), this protein is Flagellar P-ring protein 2 (flgI2).